The sequence spans 164 residues: Peptidyl-prolyl cis-trans isomerase A (164 aa).

Position 1 is an N-acetylmethionine (Met1). Val2 carries the post-translational modification N-acetylvaline; in Peptidyl-prolyl cis-trans isomerase A, N-terminally processed. In terms of domain architecture, PPIase cyclophilin-type spans 7–163 (FFDITADGEP…KKITISDCGQ (157 aa)). Lys28 carries the N6-acetyllysine; alternate modification. Residue Lys28 forms a Glycyl lysine isopeptide (Lys-Gly) (interchain with G-Cter in SUMO2); alternate linkage. Residue Lys28 forms a Glycyl lysine isopeptide (Lys-Gly) (interchain with G-Cter in ubiquitin); alternate linkage. N6-acetyllysine is present on residues Lys44 and Lys76. Ser77 carries the post-translational modification Phosphoserine. Lys82 is modified (N6-acetyllysine; alternate). A Glycyl lysine isopeptide (Lys-Gly) (interchain with G-Cter in SUMO2); alternate cross-link involves residue Lys82. Thr93 is modified (phosphothreonine). Asn108 is a glycosylation site (N-linked (GlcNAc...) asparagine). Residues Lys125, Lys131, and Lys133 each carry the N6-acetyllysine modification.

Belongs to the cyclophilin-type PPIase family. PPIase A subfamily. Interacts with protein phosphatase PPP3CA/calcineurin A. Interacts with isoform 2 of BSG/CD147. Interacts with FOXO1; the interaction promotes FOXO1 dephosphorylation, nuclear accumulation and transcriptional activity. Interacts with integrin ITGA2B:ITGB3; the interaction is ROS and peptidyl-prolyl cis-trans isomerase (PPIase) activity-dependent and is increased in the presence of thrombin. Interacts with MAP3K5. Interacts with TARDBP; the interaction is dependent on the RNA-binding activity of TARDBP and the PPIase activity of PPIA/CYPA and the acetylation of PPIA/CYPA at Lys-125 favors the interaction. Interacts with HNRNPA1, HNRNPA2B1, HNRNPC, RBMX, HNRNPK and HNRNPM. Acetylation at Lys-125 markedly inhibits catalysis of cis to trans isomerization. PPIA acetylation also antagonizes the immunosuppressive effects of cyclosporine by inhibiting the sequential steps of cyclosporine binding and calcineurin inhibition. Acetylation at Lys-125 favors the interaction with TARDBP.

Its subcellular location is the cytoplasm. It is found in the secreted. The protein resides in the nucleus. The enzyme catalyses [protein]-peptidylproline (omega=180) = [protein]-peptidylproline (omega=0). Its activity is regulated as follows. Binds cyclosporin A (CsA). CsA mediates some of its effects via an inhibitory action on PPIase. Functionally, catalyzes the cis-trans isomerization of proline imidic peptide bonds in oligopeptides. Exerts a strong chemotactic effect on leukocytes partly through activation of one of its membrane receptors BSG/CD147, initiating a signaling cascade that culminates in MAPK/ERK activation. Activates endothelial cells (ECs) in a proinflammatory manner by stimulating activation of NF-kappa-B and ERK, JNK and p38 MAP-kinases and by inducing expression of adhesion molecules including SELE and VCAM1. Induces apoptosis in ECs by promoting the FOXO1-dependent expression of CCL2 and BCL2L11 which are involved in EC chemotaxis and apoptosis. In response to oxidative stress, initiates proapoptotic and antiapoptotic signaling in ECs via activation of NF-kappa-B and AKT1 and up-regulation of antiapoptotic protein BCL2. Negatively regulates MAP3K5/ASK1 kinase activity, autophosphorylation and oxidative stress-induced apoptosis mediated by MAP3K5/ASK1. Necessary for the assembly of TARDBP in heterogeneous nuclear ribonucleoprotein (hnRNP) complexes and regulates TARDBP binding to RNA UG repeats and TARDBP-dependent expression of HDAC6, ATG7 and VCP which are involved in clearance of protein aggregates. Plays an important role in platelet activation and aggregation. Regulates calcium mobilization and integrin ITGA2B:ITGB3 bidirectional signaling via increased ROS production as well as by facilitating the interaction between integrin and the cell cytoskeleton. Binds heparan sulfate glycosaminoglycans. The polypeptide is Peptidyl-prolyl cis-trans isomerase A (Ppia) (Rattus norvegicus (Rat)).